A 610-amino-acid polypeptide reads, in one-letter code: MRGHDRINNCLPEELILEIFRRLESKPNRDACSLVCKRWLSLERFSRTTLRIGASFSPDDFISLLSRRFLYITSIHVDERISVSLPSLSPSPKRKRGRDSSSPSSSKRKKLTDKTHSGAENVESSSLTDTGLTALANGFPRIENLSLIWCPNVSSVGLCSLAQKCTSLKSLDLQGCYVGDQGLAAVGKFCKQLEELNLRFCEGLTDVGVIDLVVGCSKSLKSIGVAASAKITDLSLEAVGSHCKLLEVLYLDSEYIHDKGLIAVAQGCHRLKNLKLQCVSVTDVAFAAVGELCTSLERLALYSFQHFTDKGMRAIGKGSKKLKDLTLSDCYFVSCKGLEAIAHGCKELERVEINGCHNIGTRGIEAIGKSCPRLKELALLYCQRIGNSALQEIGKGCKSLEILHLVDCSGIGDIAMCSIAKGCRNLKKLHIRRCYEIGNKGIISIGKHCKSLTELSLRFCDKVGNKALIAIGKGCSLQQLNVSGCNQISDAGITAIARGCPQLTHLDISVLQNIGDMPLAELGEGCPMLKDLVLSHCHHITDNGLNHLVQKCKLLETCHMVYCPGITSAGVATVVSSCPHIKKVLIEKWKVTERTTRRAGSVISYLCMDL.

Residues 5 to 52 (DRINNCLPEELILEIFRRLESKPNRDACSLVCKRWLSLERFSRTTLRI) enclose the F-box domain. 19 LRR repeats span residues 53–79 (GASF…HVDE), 124–149 (SSSL…SLIW), 150–175 (CPNV…DLQG), 178–200 (VGDQ…NLRF), 201–227 (CEGL…GVAA), 228–253 (SAKI…YLDS), 256–277 (IHDK…LKLQ), 278–303 (CVSV…ALYS), 304–329 (FQHF…TLSD), 330–355 (CYFV…EING), 356–381 (CHNI…ALLY), 382–407 (CQRI…HLVD), 408–433 (CSGI…HIRR), 434–459 (CYEI…SLRF), 460–484 (CDKV…NVSG), 485–510 (CNQI…DISV), 511–536 (LQNI…VLSH), 537–562 (CHHI…HMVY), and 563–588 (CPGI…LIEK). The disordered stretch occupies residues 88–125 (LSPSPKRKRGRDSSSPSSSKRKKLTDKTHSGAENVESS).

This chain is F-box/LRR-repeat protein 4 (FBL4), found in Arabidopsis thaliana (Mouse-ear cress).